A 1344-amino-acid chain; its full sequence is DEAD-box ATP-dependent RNA helicase FANCM (1344 aa).

The segment at 39 to 61 (SSSHFTPLANPPITANLTKPPAK) is disordered. One can recognise a Helicase ATP-binding domain in the interval 124–292 (ITKTALFSNT…GIIDNLQIST (169 aa)). 137–144 (LPTGLGKT) lines the ATP pocket. Residues 240 to 243 (DEAH) carry the DEAH box motif. Positions 450-621 (KLSKMLEILV…SFNFHPSPRM (172 aa)) constitute a Helicase C-terminal domain. Disordered regions lie at residues 765–790 (VNTSQRKAKQVESPTSTLETTEKDYE), 1110–1148 (EVSSGAEMSADENEDVTGDSFEDSFIDDGTMPTANTQAE), 1183–1218 (YSAGPLTRINESRSDSDKSLSSLRTPKTTNSESNQD), and 1307–1344 (KQRSEAKEKEDATVIPNPGMQRSDGMEKDAPSFDLGLW). The segment covering 1118–1135 (SADENEDVTGDSFEDSFI) has biased composition (acidic residues). A compositionally biased stretch (polar residues) spans 1207 to 1218 (TPKTTNSESNQD). Over residues 1308 to 1318 (QRSEAKEKEDA) the composition is skewed to basic and acidic residues.

It belongs to the DEAD box helicase family. DEAH subfamily. FANCM sub-subfamily.

It localises to the nucleus. The catalysed reaction is ATP + H2O = ADP + phosphate + H(+). Involved in ordered homologous recombination (HR) events in somatic and meiotic cells. Involved in the suppression of spontaneous HR events in somatic cells. Has an opposite function to the DNA binding cofactor MHF1 which promotes spontaneous HR. Functions in replicative repair independently of MHF1 and in a parallel pathway to the endonuclease MUS81. Acts in the same pathway as the two DNA-binding cofactors MHF1 and MHF2 to restrain class II meiotic crossover (CO), and acts exclusively with MHF1 and MHF2 during meiosis to repair DNA interstrand cross-links (ICLs). This common pathway is in parallel to the pathway that involves the RECQ4A helicase. Seems to be involved in the stabilization of recombination intermediates. Involved in DNA double-strand break (DSB) repair during meiosis. Required for synthesis-dependent strand annealing (SDSA) and to a lesser extent for single-strand annealing (SSA). May process meiotic DSB repair intermediates, possibly D-loops, driving them toward noncrossover (NCO) resolution. This chain is DEAD-box ATP-dependent RNA helicase FANCM, found in Arabidopsis thaliana (Mouse-ear cress).